The chain runs to 299 residues: tRNA dimethylallyltransferase (299 aa).

8 to 15 (GPTASGKT) serves as a coordination point for ATP. 10–15 (TASGKT) is a binding site for substrate. The interaction with substrate tRNA stretch occupies residues 33–36 (DSQQ).

The protein belongs to the IPP transferase family. In terms of assembly, monomer. The cofactor is Mg(2+).

It catalyses the reaction adenosine(37) in tRNA + dimethylallyl diphosphate = N(6)-dimethylallyladenosine(37) in tRNA + diphosphate. Its function is as follows. Catalyzes the transfer of a dimethylallyl group onto the adenine at position 37 in tRNAs that read codons beginning with uridine, leading to the formation of N6-(dimethylallyl)adenosine (i(6)A). The sequence is that of tRNA dimethylallyltransferase from Anaeromyxobacter dehalogenans (strain 2CP-C).